Here is a 143-residue protein sequence, read N- to C-terminus: Small ribosomal subunit protein uS11c (143 aa).

The protein belongs to the universal ribosomal protein uS11 family. In terms of assembly, part of the 30S ribosomal subunit.

It localises to the plastid. Its subcellular location is the chloroplast. The polypeptide is Small ribosomal subunit protein uS11c (Zea mays (Maize)).